The primary structure comprises 456 residues: RUN domain-containing protein 3B (456 aa).

The segment at 1 to 26 (MASRSLGGLSGIRGGGGGGGKKSLSS) is disordered. Positions 8–21 (GLSGIRGGGGGGGK) are enriched in gly residues. At Arg-13 the chain carries Omega-N-methylarginine. In terms of domain architecture, RUN spans 57–189 (DDSSPEFNNF…IDFSFCLKGE (133 aa)). A phosphoserine mark is found at Ser-215 and Ser-216. Positions 300 to 325 (AHKLEKEQLEYIIVELQDQLTVLKNN) form a coiled coil. Positions 382-405 (SLSQTSLDPGQSQEGDGKQDTLNI) are disordered.

This sequence belongs to the RUNDC3 family. In terms of assembly, interacts with RAP2A.

This Macaca fascicularis (Crab-eating macaque) protein is RUN domain-containing protein 3B (RUNDC3B).